The primary structure comprises 1976 residues: Putative callose synthase 8 (1976 aa).

Residues 1 to 530 (MSHEIVPVDP…FWQIFRSFDR (530 aa)) are Cytoplasmic-facing. A helical membrane pass occupies residues 531-551 (MWSFFVLSLQALIIMACHDVG). Residues 552 to 565 (SPLQVFNANIFEDV) are Extracellular-facing. The helical transmembrane segment at 566–586 (MSIFITSAILKLIKGILDIIF) threads the bilayer. The Cytoplasmic portion of the chain corresponds to 587–602 (KWKARNTMPINEKKKR). Residues 603-623 (LVKLGFAAMWTIILPVLYSHS) traverse the membrane as a helical segment. Residues 624-648 (RRKYICYFTNYKTWLGEWCFSPYMV) lie on the Extracellular side of the membrane. A helical membrane pass occupies residues 649-669 (AVTIYLTGSAIELVLFFVPAI). Residues 670–707 (SKYIETSNHGIFKTLSWWGQPRLYVGRGMQETQVSQFK) lie on the Cytoplasmic side of the membrane. The chain crosses the membrane as a helical span at residues 708–728 (YTFFWILVLLTKFAFSYAFEI). Topologically, residues 729–759 (KPLIEPTRLIMKVGVRNYEWHEIFPEVKSNA) are extracellular. A helical membrane pass occupies residues 760 to 780 (AAIVAVWAPIMVVYFMDTQIW). The Cytoplasmic segment spans residues 781 to 1544 (YSVYCTIFGG…FDFFRMLSCY (764 aa)). The chain crosses the membrane as a helical span at residues 1545–1565 (FTTIGFYFSSLISVIGIYIYL). Over 1566–1595 (YGQLYLVLSGLQKTLILEAKVKNIKSLETA) the chain is Extracellular. Residues 1596-1616 (LASQSFIQLGLLTGLPMVMEI) traverse the membrane as a helical segment. The Cytoplasmic segment spans residues 1617–1620 (GLEK). The chain crosses the membrane as a helical span at residues 1621–1641 (GFLIAFQDFILMQLQLAAFFF). Topologically, residues 1642–1688 (TFSLGTKTHYFGRTILHGGAKYRPTGRKVVVFHANFSENYRLYSRSH) are extracellular. Residue Asn1676 is glycosylated (N-linked (GlcNAc...) asparagine). A helical transmembrane segment spans residues 1689-1709 (FIKGFELMILLVVYELFKHTS). Over 1710–1715 (QSNMAY) the chain is Cytoplasmic. Residues 1716 to 1736 (SFITFSVWFMSFTWLCAPFLF) traverse the membrane as a helical segment. At 1737 to 1790 (NPSGFTWEIIVGDWRDWNRWIKEQGGIGIQQDKSWQSWWNDEQAHLRGSGVGAR) the chain is on the extracellular side. Residues 1791-1811 (CLEIILSLRFFVYQYGLVYHL) traverse the membrane as a helical segment. Residues 1812–1819 (DITQSNTN) lie on the Cytoplasmic side of the membrane. A helical transmembrane segment spans residues 1820–1840 (IIVYALSWVVILATFFTVKAV). At 1841–1856 (DLGRQLFSTRKHLVFR) the chain is on the extracellular side. Residues 1857–1877 (FFKVFVFVSILTIIITLANIC) form a helical membrane-spanning segment. Topologically, residues 1878-1884 (HLSVKDL) are cytoplasmic. A helical membrane pass occupies residues 1885 to 1905 (LVSCLAFLPTGWGLILIAQAV). Topologically, residues 1906–1928 (RPKIEGTSLWEFTQVLARAYDYG) are extracellular. Residues 1929-1949 (MGVVLFAPMAILAWLPIISAF) traverse the membrane as a helical segment. The Cytoplasmic portion of the chain corresponds to 1950–1976 (QTRFLFNEAFNRRLQIQPILAGKKKNR).

The protein belongs to the glycosyltransferase 48 family.

Its subcellular location is the cell membrane. The enzyme catalyses [(1-&gt;3)-beta-D-glucosyl](n) + UDP-alpha-D-glucose = [(1-&gt;3)-beta-D-glucosyl](n+1) + UDP + H(+). Its function is as follows. Involved in callose synthesis at the forming cell plate during cytokinesis. During plant growth and development, callose is found as a transitory component of the cell plate in dividing cells, is a major component of pollen mother cell walls and pollen tubes, and is found as a structural component of plasmodesmatal canals. In Arabidopsis thaliana (Mouse-ear cress), this protein is Putative callose synthase 8 (CALS8).